A 300-amino-acid polypeptide reads, in one-letter code: Integrin-binding sialoprotein (300 aa).

The segment at R41–D258 is disordered. 6 positions are modified to phosphoserine: S46, S51, S59, S60, S82, and S90. Residues S46–D58 show a composition bias toward low complexity. Residues S59–A92 are compositionally biased toward acidic residues. Positions E93–L102 are enriched in polar residues. An N-linked (GlcNAc...) asparagine glycan is attached at N94. The span at K125–E136 shows a compositional bias: basic and acidic residues. Over residues E137 to E160 the composition is skewed to acidic residues. S139 is subject to Phosphoserine. Polar residues-rich tracts occupy residues Q161–V173, V193–A202, and I229–P243. 2 N-linked (GlcNAc...) asparagine glycosylation sites follow: N164 and N169. S266 carries the phosphoserine modification. Positions R272 to D274 match the Integrin-binding motif motif. The residue at position 293 (S293) is a Phosphoserine. Sulfotyrosine is present on residues Y299 and Y300.

Monomer. Interacts with integrins; the interaction promotes cell adhesion.

It is found in the secreted. Its function is as follows. Binds tightly to hydroxyapatite. Appears to form an integral part of the mineralized matrix. Probably important to cell-matrix interaction. Promotes adhesion and migration of various cells via the alpha-V/beta-3 integrin receptor (ITGAV:ITGB3). In Sus scrofa (Pig), this protein is Integrin-binding sialoprotein (IBSP).